A 459-amino-acid chain; its full sequence is Putative flavin-containing monooxygenase 2 (459 aa).

FAD contacts are provided by residues 17–21, Glu38, and 46–47; these read GAGVS and VW. 217 to 220 serves as a coordination point for NADP(+); that stretch reads SAID.

Belongs to the FMO family. The cofactor is FAD.

The protein is Putative flavin-containing monooxygenase 2 (FMO2) of Arabidopsis thaliana (Mouse-ear cress).